The sequence spans 561 residues: Carboxylesterase 1F (561 aa).

A signal peptide spans 1 to 17 (MFLSTLFLVSLATCVIC). C87 and C116 are disulfide-bonded. S221 acts as the Acyl-ester intermediate in catalysis. A disulfide bridge connects residues C273 and C284. Active-site charge relay system residues include E353 and H466. A Prevents secretion from ER motif is present at residues 558-561 (HNEL).

The protein belongs to the type-B carboxylesterase/lipase family. Expressed in liver, white and brown adipose tissue, kidney, intestine, adrenal, heart and ovary. Not detected in muscle, lung, testis, brain and spleen.

It localises to the lipid droplet. It is found in the cytoplasm. The protein resides in the cytosol. Its subcellular location is the endoplasmic reticulum. The protein localises to the microsome. It catalyses the reaction a carboxylic ester + H2O = an alcohol + a carboxylate + H(+). The enzyme catalyses all-trans-retinyl hexadecanoate + H2O = all-trans-retinol + hexadecanoate + H(+). Its function is as follows. Involved in the detoxification of xenobiotics and in the activation of ester and amide prodrugs. Hydrolyzes retinyl esters. Hydrolyzes p-nitrophenyl butyrate (PNPB), triacylglycerol and monoacylglycerol. Shows higher activity against PNPB, a short-chain fatty acid ester, than against triolein, a long-chain fatty acid ester. Shows no detectable activity against diacylglycerol, cholesterol ester or phospholipids. May play a role in adipocyte lipolysis. This Mus musculus (Mouse) protein is Carboxylesterase 1F.